The primary structure comprises 279 residues: Urease accessory protein UreD (279 aa).

The protein belongs to the UreD family. As to quaternary structure, ureD, UreF and UreG form a complex that acts as a GTP-hydrolysis-dependent molecular chaperone, activating the urease apoprotein by helping to assemble the nickel containing metallocenter of UreC. The UreE protein probably delivers the nickel.

The protein localises to the cytoplasm. Required for maturation of urease via the functional incorporation of the urease nickel metallocenter. In Rhodopseudomonas palustris (strain HaA2), this protein is Urease accessory protein UreD.